We begin with the raw amino-acid sequence, 316 residues long: Aspartate carbamoyltransferase catalytic subunit (316 aa).

Carbamoyl phosphate is bound by residues R66 and T67. K94 contributes to the L-aspartate binding site. Residues R116, H146, and Q149 each contribute to the carbamoyl phosphate site. L-aspartate is bound by residues R180 and R235. Carbamoyl phosphate contacts are provided by G276 and P277.

This sequence belongs to the aspartate/ornithine carbamoyltransferase superfamily. ATCase family. In terms of assembly, heterododecamer (2C3:3R2) of six catalytic PyrB chains organized as two trimers (C3), and six regulatory PyrI chains organized as three dimers (R2).

It carries out the reaction carbamoyl phosphate + L-aspartate = N-carbamoyl-L-aspartate + phosphate + H(+). The protein operates within pyrimidine metabolism; UMP biosynthesis via de novo pathway; (S)-dihydroorotate from bicarbonate: step 2/3. In terms of biological role, catalyzes the condensation of carbamoyl phosphate and aspartate to form carbamoyl aspartate and inorganic phosphate, the committed step in the de novo pyrimidine nucleotide biosynthesis pathway. The protein is Aspartate carbamoyltransferase catalytic subunit of Stenotrophomonas maltophilia (strain R551-3).